The following is a 310-amino-acid chain: D-alanyl-D-alanine endopeptidase (310 aa).

A signal peptide spans 1 to 23; sequence MRNRLLSLVTLFLSLSVATAVSA. S66 (acyl-ester intermediate) is an active-site residue. K69 functions as the Proton acceptor in the catalytic mechanism. Residue S123 is part of the active site. K230 is a substrate binding site.

Belongs to the peptidase S11 family.

Its subcellular location is the periplasm. Its function is as follows. Cell wall formation. This chain is D-alanyl-D-alanine endopeptidase (pbpG), found in Pseudomonas aeruginosa (strain ATCC 15692 / DSM 22644 / CIP 104116 / JCM 14847 / LMG 12228 / 1C / PRS 101 / PAO1).